The primary structure comprises 731 residues: MCFASSIIEAHRKLFIAPPDLDHSDPATPTISTRSKMPRGKSRLQTEVCGDCGAGDPSWASINRGILLCADCCSVHRSLGRHISIVKSLRQGNWEPSVLNFVNSLNAHGANSVWEHHLLDGSTNSTGGKHVPRWRKPTPKDALHPTKSDFIKAKHVNLTFVLKPSLQDDDDGNGSAGCLEQELSRQLHASVRTSNLETSLRFLVQGADPNYYHEDKLSTPLHMAAKFGQASQIEMLLIYGADVNALDGNGMTPLELARANNHNTIAERLLDAMYDVTDRIITFLGGKKPDHASGRHMIIPDANGADISEQLKIARGKLQLVPNKMFEELVMDLYDEVDRRECEAIWSTSTLNADHATVPFLPANPFLSATRNQGRQKLARFNRAEFTGLLTDVLVDAMRRQNMANLRPMDAPVAGHQSLQSLPYANNSMLLGSFEQGGHDPNLSDDEPIYDPVASDDDYAPVPPMAQQAIVHTPPRSANSHNEMETLRKQLNDYKSEINQLKNVVQMLSSENTQLKSKFSSASNNSVYDEPLRIDLSLSSPDTEHEPLSLPEGGTANGESGSSNDSSNQSTIKRPASMYERRLVPNVAKGNTDIRNTTSMYQMAGDGKPFGEEVKVRSDLVTRRLKELIRAMQPVPEDQKQSIAPHGELIRSAVTDLIALYANLPPNASDPSRETLKLLTRQNILIQHECENLQKAIEADDKQAIQKNTLEVRDCAFHIASAIKTLVLQFY.

Positions 32–168 (STRSKMPRGK…TFVLKPSLQD (137 aa)) constitute an Arf-GAP domain. The segment at 49 to 72 (CGDCGAGDPSWASINRGILLCADC) adopts a C4-type zinc-finger fold. The tract at residues 124–145 (NSTGGKHVPRWRKPTPKDALHP) is disordered. ANK repeat units follow at residues 216 to 245 (KLST…DVNA) and 249 to 278 (NGMT…DVTD). The disordered stretch occupies residues 435–461 (EQGGHDPNLSDDEPIYDPVASDDDYAP). Acidic residues predominate over residues 443–459 (LSDDEPIYDPVASDDDY). A coiled-coil region spans residues 477 to 518 (SANSHNEMETLRKQLNDYKSEINQLKNVVQMLSSENTQLKSK). Positions 537-582 (SLSSPDTEHEPLSLPEGGTANGESGSSNDSSNQSTIKRPASMYERR) are disordered. The segment covering 557 to 570 (NGESGSSNDSSNQS) has biased composition (low complexity).

May form homodimers (via coiled coil). Forms a complex with pix and Pak; the interaction with Pak may be indirect and mediated by pix/dPIX. Expressed in embryonic muscle syncytia (at protein level).

The protein resides in the cytoplasm. The protein localises to the synapse. It is found in the cell junction. Its subcellular location is the focal adhesion. It localises to the cell projection. The protein resides in the lamellipodium. The protein localises to the cytoskeleton. It is found in the microtubule organizing center. Its subcellular location is the centrosome. It localises to the spindle pole. GTPase-activating protein for ADP ribosylation factor family members, including ARF1. Multidomain scaffold protein that interacts with numerous proteins and therefore participates in many cellular functions, including receptor internalization, focal adhesion remodeling, and signaling by both G protein-coupled receptors and tyrosine kinase receptors. Through Pak activation, may positively regulate microtubule nucleation during interphase. May play a role in the regulation of cytokinesis. During embryogenesis, promotes proper muscle morphogenesis and proper guidance and targeting of subsets of myotubes. Required for the recruitment of Pak to muscle attachments in the embryo, probably indirectly through pix/dPIX. May be important for brain development. This chain is ARF GTPase-activating protein Git (Git), found in Drosophila melanogaster (Fruit fly).